Here is a 71-residue protein sequence, read N- to C-terminus: Disintegrin applaggin (71 aa).

The region spanning 1–71 (EAGEECDCGS…SAGCPRNPFH (71 aa)) is the Disintegrin domain. 6 disulfides stabilise this stretch: Cys-6/Cys-21, Cys-8/Cys-16, Cys-15/Cys-38, Cys-29/Cys-35, Cys-34/Cys-58, and Cys-47/Cys-65. The short motif at 50–52 (RGD) is the Cell attachment site element.

The protein belongs to the venom metalloproteinase (M12B) family. P-II subfamily. P-IIa sub-subfamily. In terms of assembly, monomer (disintegrin). Expressed by the venom gland.

It is found in the secreted. Functionally, inhibits fibrinogen interaction with platelets. Acts by binding to alpha-IIb/beta-3 (ITGA2B/ITGB3) on the platelet surface and inhibits aggregation induced by ADP, thrombin, platelet-activating factor and collagen. The sequence is that of Disintegrin applaggin from Agkistrodon piscivorus piscivorus (Eastern cottonmouth).